The following is a 229-amino-acid chain: Ribonuclease 3 (229 aa).

An RNase III domain is found at 5-127 (LDRLERKLGY…LIGAIYLDTG (123 aa)). A Mg(2+)-binding site is contributed by Glu40. Asp44 is a catalytic residue. Residues Asp113 and Glu116 each contribute to the Mg(2+) site. Glu116 is a catalytic residue. Positions 154–224 (DPKTRLQEFL…AAAALVALGV (71 aa)) constitute a DRBM domain.

The protein belongs to the ribonuclease III family. Homodimer. The cofactor is Mg(2+).

The protein resides in the cytoplasm. The enzyme catalyses Endonucleolytic cleavage to 5'-phosphomonoester.. In terms of biological role, digests double-stranded RNA. Involved in the processing of primary rRNA transcript to yield the immediate precursors to the large and small rRNAs (23S and 16S). Processes some mRNAs, and tRNAs when they are encoded in the rRNA operon. Processes pre-crRNA and tracrRNA of type II CRISPR loci if present in the organism. The polypeptide is Ribonuclease 3 (Pseudomonas paraeruginosa (strain DSM 24068 / PA7) (Pseudomonas aeruginosa (strain PA7))).